The chain runs to 329 residues: CDP-6-deoxy-L-threo-D-glycero-4-hexulose-3-dehydrase reductase (329 aa).

Residues 2–93 form the 2Fe-2S ferredoxin-type domain; that stretch reads SLNVKLHPSG…ELDVNYYPEL (92 aa). Positions 37, 42, 45, and 75 each coordinate [2Fe-2S] cluster. One can recognise an FAD-binding FR-type domain in the interval 98–197; the sequence is KKTYPCKLDS…EGPQGTFFVR (100 aa).

In terms of assembly, monomer.

The protein operates within nucleotide-sugar biosynthesis; CDP-ascarylose biosynthesis. It functions in the pathway bacterial outer membrane biogenesis; lipopolysaccharide biosynthesis. In terms of biological role, participates in the conversion of CDP-6-deoxy-D-glycero-L-threo-4-hexulose to 3,6-dideoxy-D-glycero-D-glycero-4-hexulose together with CDP-6-deoxy-D-glycero-L-threo-4-hexulose-3-dehydrase (E1) in two consecutive steps. The detailed mechanism of E3 is not yet resolved. The sequence is that of CDP-6-deoxy-L-threo-D-glycero-4-hexulose-3-dehydrase reductase (ascD) from Yersinia pseudotuberculosis serotype I (strain IP32953).